The sequence spans 279 residues: Small ribosomal subunit protein uS3 (279 aa).

The KH type-2 domain occupies 17–86 (VDEYFLEKLE…NPQIDVQEVK (70 aa)). Low complexity-rich tracts occupy residues 206–233 (AEKKSPAAGAEPAKEAAAVPAPAESTAA) and 241–252 (ESEAAEAVTPEG). The segment at 206–279 (AEKKSPAAGA…VVKTDGDSQS (74 aa)) is disordered.

The protein belongs to the universal ribosomal protein uS3 family. In terms of assembly, part of the 30S ribosomal subunit.

Its function is as follows. Binds the lower part of the 30S subunit head. The polypeptide is Small ribosomal subunit protein uS3 (Methanocella arvoryzae (strain DSM 22066 / NBRC 105507 / MRE50)).